Consider the following 432-residue polypeptide: Trigger factor (432 aa).

In terms of domain architecture, PPIase FKBP-type spans 161 to 246; sequence EDRVTLDFTG…LKKVEERELP (86 aa).

The protein belongs to the FKBP-type PPIase family. Tig subfamily.

The protein localises to the cytoplasm. The catalysed reaction is [protein]-peptidylproline (omega=180) = [protein]-peptidylproline (omega=0). Involved in protein export. Acts as a chaperone by maintaining the newly synthesized protein in an open conformation. Functions as a peptidyl-prolyl cis-trans isomerase. This chain is Trigger factor, found in Salmonella arizonae (strain ATCC BAA-731 / CDC346-86 / RSK2980).